Here is a 580-residue protein sequence, read N- to C-terminus: Zinc finger CCCH domain-containing protein 47 (580 aa).

2 ANK repeats span residues 72-102 and 107-139; these read EERTPLMVAAMYGSIKVLTFIVSTGKSDVNR and ERVTPLHCAVAGCSVNMIEVINVLLDASALVNS. 2 C3H1-type zinc fingers span residues 251–278 and 286–310; these read PYTCVPCPEFRKGSCPKGDSCEYAHGVF and QYKTRLCKDETGCARKVCFFAHKRE. A disordered region spans residues 421–451; the sequence is YVSSPSRNSQMGQNMNQHYPSSPVRQPPSQH.

As to expression, expressed in roots and anthers.

It localises to the nucleus. Its function is as follows. Involved in salt stress response. May positively modulate plant tolerance to salt stress. The sequence is that of Zinc finger CCCH domain-containing protein 47 from Arabidopsis thaliana (Mouse-ear cress).